The chain runs to 353 residues: Mannonate dehydratase (353 aa).

The protein belongs to the mannonate dehydratase family. Fe(2+) is required as a cofactor. The cofactor is Mn(2+).

It carries out the reaction D-mannonate = 2-dehydro-3-deoxy-D-gluconate + H2O. The protein operates within carbohydrate metabolism; pentose and glucuronate interconversion. Its function is as follows. Catalyzes the dehydration of D-mannonate. The sequence is that of Mannonate dehydratase from Burkholderia cenocepacia (strain ATCC BAA-245 / DSM 16553 / LMG 16656 / NCTC 13227 / J2315 / CF5610) (Burkholderia cepacia (strain J2315)).